Consider the following 404-residue polypeptide: Ubiquitin-like modifier-activating enzyme 5 (404 aa).

ATP contacts are provided by glycine 83, aspartate 104, lysine 127, asparagine 150, and asparagine 184. Zn(2+) is bound by residues cysteine 226 and cysteine 229. Catalysis depends on cysteine 250, which acts as the Glycyl thioester intermediate. Residues cysteine 303 and cysteine 308 each coordinate Zn(2+). The disordered stretch occupies residues 372-404; that stretch reads APEKSSETSEETVSAATADETSLEDLMAQMKSM. Positions 382-391 are enriched in low complexity; it reads ETVSAATADE.

This sequence belongs to the ubiquitin-activating E1 family. UBA5 subfamily. In terms of assembly, interacts (via C-terminus) with Ufc1. Interacts with Ufm1.

Its subcellular location is the cytoplasm. The protein localises to the nucleus. It localises to the golgi apparatus. In terms of biological role, E1-like enzyme which activates UFM1. This chain is Ubiquitin-like modifier-activating enzyme 5, found in Drosophila melanogaster (Fruit fly).